We begin with the raw amino-acid sequence, 313 residues long: Porphobilinogen deaminase (313 aa).

The residue at position 240 (C240) is an S-(dipyrrolylmethanemethyl)cysteine.

This sequence belongs to the HMBS family. As to quaternary structure, monomer. Dipyrromethane is required as a cofactor.

The catalysed reaction is 4 porphobilinogen + H2O = hydroxymethylbilane + 4 NH4(+). It functions in the pathway porphyrin-containing compound metabolism; protoporphyrin-IX biosynthesis; coproporphyrinogen-III from 5-aminolevulinate: step 2/4. Its function is as follows. Tetrapolymerization of the monopyrrole PBG into the hydroxymethylbilane pre-uroporphyrinogen in several discrete steps. The sequence is that of Porphobilinogen deaminase from Moorella thermoacetica (strain ATCC 39073 / JCM 9320).